We begin with the raw amino-acid sequence, 507 residues long: ATP synthase subunit alpha, chloroplastic (507 aa).

Residue 170–177 (GDRQTGKT) coordinates ATP.

This sequence belongs to the ATPase alpha/beta chains family. As to quaternary structure, F-type ATPases have 2 components, CF(1) - the catalytic core - and CF(0) - the membrane proton channel. CF(1) has five subunits: alpha(3), beta(3), gamma(1), delta(1), epsilon(1). CF(0) has four main subunits: a, b, b' and c.

The protein localises to the plastid. It localises to the chloroplast thylakoid membrane. The catalysed reaction is ATP + H2O + 4 H(+)(in) = ADP + phosphate + 5 H(+)(out). Functionally, produces ATP from ADP in the presence of a proton gradient across the membrane. The alpha chain is a regulatory subunit. The polypeptide is ATP synthase subunit alpha, chloroplastic (Eucalyptus globulus subsp. globulus (Tasmanian blue gum)).